We begin with the raw amino-acid sequence, 179 residues long: MAQAEGTPDVPSMGRRQFMNLLTFGTVTGVALGALYPVVNYFIPPSSGGSGGGVTAKDALGNDIIVSEFLANHNSGERTLAQGLKGDPTYVVIEGEQTLAEYGLNAVCTHLGCVVPWNGSENKFICPCHGSQYDNTGKVVRGPAPLSLALVHANVSDDKLVFTQWEETDFRTGEKPWWV.

A helical membrane pass occupies residues 21-43; it reads LLTFGTVTGVALGALYPVVNYFI. Positions 61–162 constitute a Rieske domain; that stretch reads GNDIIVSEFL…ANVSDDKLVF (102 aa). Residues Cys108, His110, Cys126, and His129 each coordinate [2Fe-2S] cluster. A disulfide bridge connects residues Cys113 and Cys128.

This sequence belongs to the Rieske iron-sulfur protein family. As to quaternary structure, the 4 large subunits of the cytochrome b6-f complex are cytochrome b6, subunit IV (17 kDa polypeptide, PetD), cytochrome f and the Rieske protein, while the 4 small subunits are PetG, PetL, PetM and PetN. The complex functions as a dimer. It depends on [2Fe-2S] cluster as a cofactor.

The protein localises to the cellular thylakoid membrane. It catalyses the reaction 2 oxidized [plastocyanin] + a plastoquinol + 2 H(+)(in) = 2 reduced [plastocyanin] + a plastoquinone + 4 H(+)(out). In terms of biological role, component of the cytochrome b6-f complex, which mediates electron transfer between photosystem II (PSII) and photosystem I (PSI), cyclic electron flow around PSI, and state transitions. The sequence is that of Cytochrome b6-f complex iron-sulfur subunit from Trichodesmium erythraeum (strain IMS101).